A 534-amino-acid polypeptide reads, in one-letter code: Flavonoid-6-hydroxylase (534 aa).

Residues 3-23 (FISFVYTLIAFSSLLYFYLIW) form a helical membrane-spanning segment. Cysteine 467 is a heme binding site.

Belongs to the cytochrome P450 family. Heme serves as cofactor. As to expression, expressed in leaves.

The protein resides in the membrane. The enzyme catalyses genkwanin + reduced [NADPH--hemoprotein reductase] + O2 = scutellarein 7-methyl ether + oxidized [NADPH--hemoprotein reductase] + H2O. It carries out the reaction (2S)-sakuranetin + reduced [NADPH--hemoprotein reductase] + O2 = (2S)-7-methylcarthamidin + oxidized [NADPH--hemoprotein reductase] + H2O + H(+). The catalysed reaction is apigenin 4',7-dimethyl ether + reduced [NADPH--hemoprotein reductase] + O2 = ladanein + oxidized [NADPH--hemoprotein reductase] + H2O + H(+). It catalyses the reaction (2S)-naringenin 4',7-dimethyl ether + reduced [NADPH--hemoprotein reductase] + O2 = (2S)-carthamidin-4',7-dimethyl ether + oxidized [NADPH--hemoprotein reductase] + H2O + H(+). It participates in flavonoid metabolism. Functionally, hydroxylase involved in the biosynthesis of polymethoxylated flavonoids natural products such as nevadensin and salvigenin, aroma compounds which contribute to the flavor of sweet basil, and exhibit pharmacological activities such as anti-allergic, anti-oxidant, antibacterial, anti-proliferative, and anti-inflammatory effects. Catalyzes the 6-hydroxylation of 7-O-methylated precursors such as the conversion of genkwanin (GENK) to scutellarein-7-methyl ether (SCU7Me). Can also use, with a lower efficiency, apigenin-7,4'-dimethyl ether (AdM), naringenin-7-methyl ether (SAK) and naringenin-7,4'-dimethyl ether (NdM) as substrates. The protein is Flavonoid-6-hydroxylase of Ocimum basilicum (Sweet basil).